The primary structure comprises 149 residues: Transcriptional repressor NrdR (149 aa).

The segment at 3-34 is a zinc-finger region; sequence CPFCSAVDTKVIDSRLVGEGSQVRRRRQCLVC. In terms of domain architecture, ATP-cone spans 49–139; it reads PRVIKSNEVR…VYRSFEDIRE (91 aa).

Belongs to the NrdR family. Requires Zn(2+) as cofactor.

Its function is as follows. Negatively regulates transcription of bacterial ribonucleotide reductase nrd genes and operons by binding to NrdR-boxes. This Pectobacterium atrosepticum (strain SCRI 1043 / ATCC BAA-672) (Erwinia carotovora subsp. atroseptica) protein is Transcriptional repressor NrdR.